The primary structure comprises 137 residues: Large ribosomal subunit protein uL16 (137 aa).

This sequence belongs to the universal ribosomal protein uL16 family. As to quaternary structure, part of the 50S ribosomal subunit.

Its function is as follows. Binds 23S rRNA and is also seen to make contacts with the A and possibly P site tRNAs. In Rhodopseudomonas palustris (strain ATCC BAA-98 / CGA009), this protein is Large ribosomal subunit protein uL16.